The sequence spans 404 residues: Bifunctional enzyme IspD/IspF (404 aa).

The 2-C-methyl-D-erythritol 4-phosphate cytidylyltransferase stretch occupies residues M1–V243. The tract at residues R244–A404 is 2-C-methyl-D-erythritol 2,4-cyclodiphosphate synthase. A divalent metal cation contacts are provided by D250 and H252. Residues D250–H252 and H276–S277 each bind 4-CDP-2-C-methyl-D-erythritol 2-phosphate. H284 provides a ligand contact to a divalent metal cation. Residues D298–G300, T374–E377, F381, and R384 contribute to the 4-CDP-2-C-methyl-D-erythritol 2-phosphate site.

This sequence in the N-terminal section; belongs to the IspD/TarI cytidylyltransferase family. IspD subfamily. It in the C-terminal section; belongs to the IspF family. Requires a divalent metal cation as cofactor.

The enzyme catalyses 2-C-methyl-D-erythritol 4-phosphate + CTP + H(+) = 4-CDP-2-C-methyl-D-erythritol + diphosphate. It catalyses the reaction 4-CDP-2-C-methyl-D-erythritol 2-phosphate = 2-C-methyl-D-erythritol 2,4-cyclic diphosphate + CMP. Its pathway is isoprenoid biosynthesis; isopentenyl diphosphate biosynthesis via DXP pathway; isopentenyl diphosphate from 1-deoxy-D-xylulose 5-phosphate: step 2/6. The protein operates within isoprenoid biosynthesis; isopentenyl diphosphate biosynthesis via DXP pathway; isopentenyl diphosphate from 1-deoxy-D-xylulose 5-phosphate: step 4/6. Bifunctional enzyme that catalyzes the formation of 4-diphosphocytidyl-2-C-methyl-D-erythritol from CTP and 2-C-methyl-D-erythritol 4-phosphate (MEP) (IspD), and catalyzes the conversion of 4-diphosphocytidyl-2-C-methyl-D-erythritol 2-phosphate (CDP-ME2P) to 2-C-methyl-D-erythritol 2,4-cyclodiphosphate (ME-CPP) with a corresponding release of cytidine 5-monophosphate (CMP) (IspF). The chain is Bifunctional enzyme IspD/IspF from Sinorhizobium medicae (strain WSM419) (Ensifer medicae).